A 164-amino-acid chain; its full sequence is Succinate dehydrogenase assembly factor 2, mitochondrial (164 aa).

Residues 1–27 (MAVVTLIPTLARVLSKHSLLSPLLSVT) constitute a mitochondrion transit peptide.

It belongs to the SDHAF2 family. As to quaternary structure, interacts with SDHA within the SDH catalytic dimer.

Its subcellular location is the mitochondrion matrix. Functionally, plays an essential role in the assembly of succinate dehydrogenase (SDH), an enzyme complex (also referred to as respiratory complex II) that is a component of both the tricarboxylic acid (TCA) cycle and the mitochondrial electron transport chain, and which couples the oxidation of succinate to fumarate with the reduction of ubiquinone (coenzyme Q) to ubiquinol. Required for flavinylation (covalent attachment of FAD) of the flavoprotein subunit SDHA of the SDH catalytic dimer. In Rattus norvegicus (Rat), this protein is Succinate dehydrogenase assembly factor 2, mitochondrial.